Reading from the N-terminus, the 269-residue chain is Thiazole synthase (269 aa).

The active-site Schiff-base intermediate with DXP is lysine 109. 1-deoxy-D-xylulose 5-phosphate is bound by residues glycine 170, 196–197 (AG), and 218–219 (NT).

This sequence belongs to the ThiG family. Homotetramer. Forms heterodimers with either ThiH or ThiS.

It is found in the plastid. The protein resides in the chloroplast. The catalysed reaction is [ThiS sulfur-carrier protein]-C-terminal-Gly-aminoethanethioate + 2-iminoacetate + 1-deoxy-D-xylulose 5-phosphate = [ThiS sulfur-carrier protein]-C-terminal Gly-Gly + 2-[(2R,5Z)-2-carboxy-4-methylthiazol-5(2H)-ylidene]ethyl phosphate + 2 H2O + H(+). It functions in the pathway cofactor biosynthesis; thiamine diphosphate biosynthesis. Catalyzes the rearrangement of 1-deoxy-D-xylulose 5-phosphate (DXP) to produce the thiazole phosphate moiety of thiamine. Sulfur is provided by the thiocarboxylate moiety of the carrier protein ThiS. In vitro, sulfur can be provided by H(2)S. The sequence is that of Thiazole synthase from Phaeodactylum tricornutum (strain CCAP 1055/1).